The primary structure comprises 119 residues: Large ribosomal subunit protein uL22 (119 aa).

Belongs to the universal ribosomal protein uL22 family. Part of the 50S ribosomal subunit.

Its function is as follows. This protein binds specifically to 23S rRNA; its binding is stimulated by other ribosomal proteins, e.g. L4, L17, and L20. It is important during the early stages of 50S assembly. It makes multiple contacts with different domains of the 23S rRNA in the assembled 50S subunit and ribosome. In terms of biological role, the globular domain of the protein is located near the polypeptide exit tunnel on the outside of the subunit, while an extended beta-hairpin is found that lines the wall of the exit tunnel in the center of the 70S ribosome. The protein is Large ribosomal subunit protein uL22 of Rhodopirellula baltica (strain DSM 10527 / NCIMB 13988 / SH1).